A 1767-amino-acid chain; its full sequence is MNKGLFEKRCKYSIRKFSLGVASVMIGAAFFGTSPVLADSVQSGSTANLPADLATALATAKENDGRDFEAPKVGEDQGSPEVTDGPKTEEELLALEKEKPAEEKPKEDKPAAAKPETPKTVTPEWQTVANKEQQGTVTIREEKGVRYNQLSSTAQNDNAGKPALFEKKGLTVDANGNATVDLTFKDDSEKGKSRFGVFLKFKDTKNNVFVGYDKDGWFWEYKSPTTSTWYRGSRVAAPETGSTNRLSITLKSDGQLNASNNDVNLFDTVTLPAAVNDHLKNEKKILLKAGSYDDERTVVSVKTDNQEGVKTEDTPAEKETGPEVDDSKVTYDTIQSKVLKAVIDQAFPRVKEYSLNGHTLPGQVQQFNQVFINNHRITPEVTYKKINETTAEYLMKLRDDAHLINAEMTVRLQVVDNQLHFDVTKIVNHNQVTPGQKIDDESKLLSSISFLGNALVSVSSNQTGAKFDGATMSNNTHVSGDDHIDVTNPMKDLAKGYMYGFVSTDKLAAGVWSNSQNSYGGGSNDWTRLTAYKETVGNANYVGIHSSEWQWEKAYKGIVFPEYTKELPSAKVVITEDANADKNVDWQDGAIAYRSIMNNPQGWEKVKDITAYRIAMNFGSQAQNPFLMTLDGIKKINLHTDGLGQGVLLKGYGSEGHDSGHLNYADIGKRIGGVEDFKTLIEKAKKYGAHLGIHVNASETYPESKYFNEKILRKNPDGSYSYGWNWLDQGINIDAAYDLAHGRLARWEDLKKKLGDGLDFIYVDVWGNGQSGDNGAWATHVLAKEINKQGWRFAIEWGHGGEYDSTFHHWAADLTYGGYTNKGINSAITRFIRNHQKDAWVGDYRSYGGAANYPLLGGYSMKDFEGWQGRSDYNGYVTNLFAHDVMTKYFQHFTVSKWENGTPVTMTDNGSTYKWTPEMRVELVDADNNKVVVTRKSNDVNSPQYRERTVTLNGRVIQDGSAYLTPWNWDANGKKLSTDKEKMYYFNTQAGATTWTLPSDWAKSKVYLYKLTDQGKTEEQELTVKDGKITLDLLANQPYVLYRSKQTNPEMSWSEGMHIYDQGFNSGTLKHWTISGDASKAEIVKSQGANDMLRIQGNKEKVSLTQKLTGLKPNTKYAVYVGVDNRSNAKASITVNTGEKEVTTYTNKSLALNYVKAYAHNTRRDNATVDDTSYFQNMYAFFTTGADVSNVTLTLSREAGDQATYFDEIRTFENNSSMYGDKHDTGKGTFKQDFENVAQGIFPFVVGGVEGVEDNRTHLSEKHNPYTQRGWNGKKVDDVIEGNWSLKTNGLVSRRNLVYQTIPQNFRFEAGKTYRVTFEYEAGSDNTYAFVVGKGEFQSGRRGTQASNLEMHELPNTWTDSKKAKKATFLVTGAETGDTWVGIYSTGNASNTRGDSGGNANFRGYNDFMMDNLQIEEITLTGKMLTENALKNYLPTVAMTNYTKESMDALKEAVFNLSQADDDISVEEARAEIAKIEALKNALVQKKTALVADDFASLTAPAQAQEGLANAFDGNVSSLWHTSWNGGDVGKPATMVLKEPTEITGLRYVPRGSGSNGNLRDVKLVVTDESGKEHTFTATDWPNNNKPKDIDFGKTIKAKKIVLTGTKTYGDGGDKYQSAAELIFTRPQVAETPLDLSGYEAALVKAQKLTDKDNQEEVASVQASMKYATDNHLLTERMVEYFADYLNQLKDSATKPDAPTVEKPEFKLRSLASEQGKTPDYKQEIARPETPEQILPATGESQSDTALILASVSLALSALFVVKTKKD.

A signal peptide spans 1 to 39 (MNKGLFEKRCKYSIRKFSLGVASVMIGAAFFGTSPVLAD). Basic and acidic residues-rich tracts occupy residues 61–75 (KEND…KVGE) and 84–111 (DGPK…DKPA). 2 disordered regions span residues 61-124 (KEND…VTPE) and 301-324 (VKTD…GPEV). Low complexity predominate over residues 112 to 124 (AAKPETPKTVTPE). The span at 304 to 324 (DNQEGVKTEDTPAEKETGPEV) shows a compositional bias: basic and acidic residues. Ca(2+) is bound by residues Asp577, Asn579, Asp581, Asn583, and Asp588. Residues 602–893 (GWEKVKDITA…DVMTKYFQHF (292 aa)) are catalytic. Asp658 lines the substrate pocket. Asp764 acts as the Nucleophile in catalysis. Glu796 acts as the Proton donor/acceptor in catalysis. Asp1233, Glu1235, Glu1281, Trp1284, and Asp1411 together coordinate Ca(2+). Positions 1711-1730 (LASEQGKTPDYKQEIARPET) are disordered. The span at 1717–1730 (KTPDYKQEIARPET) shows a compositional bias: basic and acidic residues. The LPXTG sorting signal signature appears at 1735-1739 (LPATG). Thr1738 carries the post-translational modification Pentaglycyl murein peptidoglycan amidated threonine. A propeptide spans 1739–1767 (GESQSDTALILASVSLALSALFVVKTKKD) (removed by sortase).

The protein belongs to the glycosyl hydrolase 101 family. A subfamily.

It localises to the secreted. The protein localises to the cell wall. It carries out the reaction a 3-O-[beta-D-galactosyl-(1-&gt;3)-N-acetyl-alpha-D-galactosaminyl]-L-threonyl-[protein] + H2O = beta-D-galactosyl-(1-&gt;3)-N-acetyl-D-galactosamine + L-threonyl-[protein]. The catalysed reaction is a 3-O-[beta-D-galactosyl-(1-&gt;3)-N-acetyl-alpha-D-galactosaminyl]-L-seryl-[protein] + H2O = beta-D-galactosyl-(1-&gt;3)-N-acetyl-D-galactosamine + L-seryl-[protein]. In terms of biological role, involved in the breakdown of mucin-type O-linked glycans. Specifically removes the T-antigen disaccharide (Gal-beta-1,3-GalNAc-alpha) from extracellular host glycoproteins. Representative of a broadly important class of virulence factors. The protein is Endo-alpha-N-acetylgalactosaminidase of Streptococcus pneumoniae serotype 4 (strain ATCC BAA-334 / TIGR4).